Here is a 275-residue protein sequence, read N- to C-terminus: Tryptophan synthase alpha chain (275 aa).

Residues Glu-49 and Asp-60 each act as proton acceptor in the active site.

The protein belongs to the TrpA family. Tetramer of two alpha and two beta chains.

The enzyme catalyses (1S,2R)-1-C-(indol-3-yl)glycerol 3-phosphate + L-serine = D-glyceraldehyde 3-phosphate + L-tryptophan + H2O. Its pathway is amino-acid biosynthesis; L-tryptophan biosynthesis; L-tryptophan from chorismate: step 5/5. The alpha subunit is responsible for the aldol cleavage of indoleglycerol phosphate to indole and glyceraldehyde 3-phosphate. This Psychrobacter sp. (strain PRwf-1) protein is Tryptophan synthase alpha chain.